A 381-amino-acid chain; its full sequence is L-lactate dehydrogenase (381 aa).

The FMN hydroxy acid dehydrogenase domain occupies 1–380; sequence MIISSASDYR…KPEALVDLSK (380 aa). Substrate is bound at residue Tyr-24. Residues Ser-106 and Gln-127 each coordinate FMN. Tyr-129 lines the substrate pocket. Thr-155 is an FMN binding site. Position 164 (Arg-164) interacts with substrate. Residue Lys-251 coordinates FMN. The active-site Proton acceptor is His-275. Position 278 (Arg-278) interacts with substrate. Position 306-330 (306-330) interacts with FMN; it reads DSGIRNGLDIVRMLALGADATMLGR.

Belongs to the FMN-dependent alpha-hydroxy acid dehydrogenase family. FMN serves as cofactor.

It is found in the cell inner membrane. The catalysed reaction is (S)-lactate + A = pyruvate + AH2. Its function is as follows. Catalyzes the conversion of L-lactate to pyruvate. Is coupled to the respiratory chain. In Haemophilus influenzae (strain 86-028NP), this protein is L-lactate dehydrogenase.